Reading from the N-terminus, the 399-residue chain is Long-chain primary alcohol dehydrogenase AdhA (399 aa).

It belongs to the iron-containing alcohol dehydrogenase family. As to quaternary structure, homotetramer. Requires Zn(2+) as cofactor.

The catalysed reaction is a primary alcohol + NADP(+) = an aldehyde + NADPH + H(+). Alcohol dehydrogenase active against primary long-chain alcohols. Pentan-1-ol is the optimum substrate in vitro, but also shows efficient dehydrogenase activity on propanol, hexanol, and ethanol. This is Long-chain primary alcohol dehydrogenase AdhA (adhA) from Thermoanaerobacter ethanolicus (Clostridium thermohydrosulfuricum).